Reading from the N-terminus, the 460-residue chain is Argininosuccinate lyase (460 aa).

It belongs to the lyase 1 family. Argininosuccinate lyase subfamily.

It is found in the cytoplasm. The enzyme catalyses 2-(N(omega)-L-arginino)succinate = fumarate + L-arginine. It functions in the pathway amino-acid biosynthesis; L-arginine biosynthesis; L-arginine from L-ornithine and carbamoyl phosphate: step 3/3. The chain is Argininosuccinate lyase from Lawsonia intracellularis (strain PHE/MN1-00).